Here is a 460-residue protein sequence, read N- to C-terminus: Argininosuccinate lyase (460 aa).

The protein belongs to the lyase 1 family. Argininosuccinate lyase subfamily.

It localises to the cytoplasm. It carries out the reaction 2-(N(omega)-L-arginino)succinate = fumarate + L-arginine. Its pathway is amino-acid biosynthesis; L-arginine biosynthesis; L-arginine from L-ornithine and carbamoyl phosphate: step 3/3. This chain is Argininosuccinate lyase, found in Campylobacter jejuni subsp. doylei (strain ATCC BAA-1458 / RM4099 / 269.97).